Here is a 254-residue protein sequence, read N- to C-terminus: Alcohol dehydrogenase 2 (254 aa).

Residue 10–33 (FVAGLGGIGFDTSREIVKSGPKNL) coordinates NAD(+). Ser-138 is a binding site for substrate. The active-site Proton acceptor is Tyr-151.

The protein belongs to the short-chain dehydrogenases/reductases (SDR) family. Homodimer.

It carries out the reaction a primary alcohol + NAD(+) = an aldehyde + NADH + H(+). The catalysed reaction is a secondary alcohol + NAD(+) = a ketone + NADH + H(+). The sequence is that of Alcohol dehydrogenase 2 (Adh2) from Drosophila wheeleri (Fruit fly).